The chain runs to 362 residues: MGSSFGDLFRVSTFGESHGGSVGVIVEGCPPRLEIDLEKIQEELDRRRPGQSKITTPRKELDQVEILSGIANRETLGTPIAMIVRNRDQRPSDYKEMKNIFRPSHADGTYHLKYGIQAPSGGGRASARETIGRVAAGAIAKQLLQKVQNTQILAWVKRIHNIEAEIDINTIGFADIESNIVRCPNQDVAKLMIQRIEEISRDGDSCGGLIECVVRNVPAGLGMPVFDKLEADLSKALMSLPATKGFEVGSGFRGTFLKGSEHNDAFIAGDKNRLRTATNNSGGIQGGISNGEPIILRVGFKPTATIRKDQQTIDSEGKQITLASKGRHDPCVLPRAVPMVEAMVSIVLADHLLRQRGQCSLW.

Position 47 (Arg-47) interacts with NADP(+). Residues Arg-124–Ser-126, Gly-286, Lys-301–Thr-305, and Arg-327 each bind FMN.

This sequence belongs to the chorismate synthase family. In terms of assembly, homotetramer. FMNH2 is required as a cofactor.

It carries out the reaction 5-O-(1-carboxyvinyl)-3-phosphoshikimate = chorismate + phosphate. The protein operates within metabolic intermediate biosynthesis; chorismate biosynthesis; chorismate from D-erythrose 4-phosphate and phosphoenolpyruvate: step 7/7. Functionally, catalyzes the anti-1,4-elimination of the C-3 phosphate and the C-6 proR hydrogen from 5-enolpyruvylshikimate-3-phosphate (EPSP) to yield chorismate, which is the branch point compound that serves as the starting substrate for the three terminal pathways of aromatic amino acid biosynthesis. This reaction introduces a second double bond into the aromatic ring system. The sequence is that of Chorismate synthase from Prochlorococcus marinus (strain SARG / CCMP1375 / SS120).